The following is a 312-amino-acid chain: Olfactory receptor OR51C1 (312 aa).

Residues 1 to 26 (MGSNITSTSIIFLLTGVPGLEAFHTW) are Extracellular-facing. Residues 27–47 (ISIPFCFLSVTALLGNSLILF) traverse the membrane as a helical segment. At 48 to 66 (ATITQPSLHEPMYYFLSML) the chain is on the cytoplasmic side. A helical membrane pass occupies residues 67 to 87 (SATDLGLSISTLVTMLSIFWF). Topologically, residues 88 to 99 (NVREISFNACLS) are extracellular. Residues Cys-97 and Cys-179 are joined by a disulfide bond. Residues 100-120 (HMFFIKFFTVMESSVLLAMAF) traverse the membrane as a helical segment. At 121-143 (DRFVAVSNPLRYAMILTDSRIAQ) the chain is on the cytoplasmic side. Residues 144-164 (IGVASVIRGLLMLTPMVALLI) traverse the membrane as a helical segment. Residues 165-201 (RLSYCHSQVLHHSYCYHPDVMKLSCTDTRINSAVGLT) lie on the Extracellular side of the membrane. Residues 202-222 (AMFSTVGVDLLLILLSYVLII) form a helical membrane-spanning segment. Residues 223-240 (RTVLSVASPEERKETFST) are Cytoplasmic-facing. Residues 241–261 (CVSHIVAFAIYYIPLISLSIV) traverse the membrane as a helical segment. Over 262–273 (HRFGKQAPAYVH) the chain is Extracellular. Residues 274–294 (TMIANTYLLISPLMNPVIYSV) form a helical membrane-spanning segment. Topologically, residues 295-312 (KTKQIRRAVIKILHSKET) are cytoplasmic.

It belongs to the G-protein coupled receptor 1 family.

Its subcellular location is the membrane. Its function is as follows. Odorant receptor. This chain is Olfactory receptor OR51C1, found in Homo sapiens (Human).